Consider the following 516-residue polypeptide: Citrate synthase, glyoxysomal (516 aa).

The N-terminal 43 residues, 1 to 43 (MPTDMELSPSNVARHRLAVLAAHLSAASLEPPVMASSLEAHCV), are a transit peptide targeting the glyoxysome. Active-site residues include histidine 329, histidine 368, and aspartate 424.

Belongs to the citrate synthase family.

It localises to the glyoxysome. The enzyme catalyses oxaloacetate + acetyl-CoA + H2O = citrate + CoA + H(+). It functions in the pathway carbohydrate metabolism; glyoxylate cycle; isocitrate from oxaloacetate: step 1/2. This Cucurbita maxima (Pumpkin) protein is Citrate synthase, glyoxysomal.